The chain runs to 140 residues: ATP synthase epsilon chain (140 aa).

The protein belongs to the ATPase epsilon chain family. In terms of assembly, F-type ATPases have 2 components, CF(1) - the catalytic core - and CF(0) - the membrane proton channel. CF(1) has five subunits: alpha(3), beta(3), gamma(1), delta(1), epsilon(1). CF(0) has three main subunits: a, b and c.

The protein resides in the cell inner membrane. Its function is as follows. Produces ATP from ADP in the presence of a proton gradient across the membrane. This is ATP synthase epsilon chain from Yersinia enterocolitica serotype O:8 / biotype 1B (strain NCTC 13174 / 8081).